Here is a 660-residue protein sequence, read N- to C-terminus: tRNA 5-methylaminomethyl-2-thiouridine biosynthesis bifunctional protein MnmC (660 aa).

A tRNA (mnm(5)s(2)U34)-methyltransferase region spans residues 1 to 242; the sequence is MTDRIVPATL…KRAMLVGEFA (242 aa). The interval 266-660 is FAD-dependent cmnm(5)s(2)U34 oxidoreductase; it reads IGAGLAGCAV…VRALRHGRVA (395 aa).

It in the N-terminal section; belongs to the methyltransferase superfamily. tRNA (mnm(5)s(2)U34)-methyltransferase family. In the C-terminal section; belongs to the DAO family. FAD is required as a cofactor.

It localises to the cytoplasm. The catalysed reaction is 5-aminomethyl-2-thiouridine(34) in tRNA + S-adenosyl-L-methionine = 5-methylaminomethyl-2-thiouridine(34) in tRNA + S-adenosyl-L-homocysteine + H(+). Catalyzes the last two steps in the biosynthesis of 5-methylaminomethyl-2-thiouridine (mnm(5)s(2)U) at the wobble position (U34) in tRNA. Catalyzes the FAD-dependent demodification of cmnm(5)s(2)U34 to nm(5)s(2)U34, followed by the transfer of a methyl group from S-adenosyl-L-methionine to nm(5)s(2)U34, to form mnm(5)s(2)U34. The sequence is that of tRNA 5-methylaminomethyl-2-thiouridine biosynthesis bifunctional protein MnmC from Burkholderia pseudomallei (strain K96243).